The sequence spans 198 residues: Probable nicotinate-nucleotide adenylyltransferase (198 aa).

It belongs to the NadD family.

The catalysed reaction is nicotinate beta-D-ribonucleotide + ATP + H(+) = deamido-NAD(+) + diphosphate. Its pathway is cofactor biosynthesis; NAD(+) biosynthesis; deamido-NAD(+) from nicotinate D-ribonucleotide: step 1/1. Its function is as follows. Catalyzes the reversible adenylation of nicotinate mononucleotide (NaMN) to nicotinic acid adenine dinucleotide (NaAD). The polypeptide is Probable nicotinate-nucleotide adenylyltransferase (Chlorobium phaeobacteroides (strain BS1)).